The primary structure comprises 620 residues: MALLQIAEPGQSAAPHQHRLAVGIDLGTTNSLVAAVRSGVADTLADESGRHALASVVRYSEDGVQVGVDAERFSAQDPLNTVVSVKRFMGRSLSDIQAKDASLPYNFSASENGLPLFNTQAGQFNPIQISADILRPLVDRAEKTLGGSLEGVVITVPAYFDDAQRQGTKEAASLLGVKVLRLLNEPTAAAIAYGLDSGQEGVIAIYDLGGGTFDISILRLNKGVFEVLATGGDSALGGDDFDHALAAHLQESWQLTSLTASERRALLIESRRVKEALTEQASVTASLTLEQGIVHEQVVDKAQFDALIESLVKKTIASCRRALRDAAISNDEVLETVMVGGSTRVPLVRERVEGFFGKAPLTSIDPDRVVAIGAAIQADILVGNKPESDLLLLDVIPLSLGIETMGGLVEKVVSRNTTIPVARAQEFTTFKDGQTAMAFHVVQGERELVADCRSLARFTLKGIPPMAAGAAHIRVTFQVDADGLLSVTAMEKSSGVQASIQVKPSFGLTDEEIGTMLKDSMAHAKEDIERRMLAEQQVEAARVLESLSAALAKDGDLLDEAEAATIQAGMANLAQVASQSDTDAIEKAIAALDDASQDFAAKRMDNSIRLALKGQSVDNI.

Belongs to the heat shock protein 70 family.

Functionally, chaperone involved in the maturation of iron-sulfur cluster-containing proteins. Has a low intrinsic ATPase activity which is markedly stimulated by HscB. This chain is Chaperone protein HscA homolog, found in Shewanella loihica (strain ATCC BAA-1088 / PV-4).